We begin with the raw amino-acid sequence, 512 residues long: MTNNPPSAQIKPGEYGFPLKLKARYDNFIGGEWVAPADGEYYQNLTPVTGQLLCEVASSGKRDIDLALDAAHKVKDKWAHTSVQDRAAILFKIADRMEQNLELLATAETWDNGKPIRETSAADVPLAIDHFRYFASCIRAQEGGISEVDSETVAYHFHEPLGVVGQIIPWNFPLLMASWKMAPALAAGNCVVLKPARLTPLSVLLLMEIVGDLLPPGVVNVVNGAGGVIGEYLATSKRIAKVAFTGSTEVGQQIMQYATQNIIPVTLELGGKSPNIFFADVMDEEDAFFDKALEGFALFAFNQGEVCTCPSRALVQESIYERFMERAIRRVESIRSGNPLDSVTQMGAQVSHGQLETILNYIDIGKKEGADVLTGGRRKLLEGELKDGYYLEPTILFGQNNMRVFQEEIFGPVLAVTTFKTMEEALELANDTQYGLGAGVWSRNGNLAYKMGRGIQAGRVWTNCYHAYPAHAAFGGYKQSGIGRETHKMMLEHYQQTKCLLVSYSDKPLGLF.

Active-site residues include Glu268 and Cys307.

Homotetramer.

The enzyme catalyses an aldehyde + NADP(+) + H2O = a carboxylate + NADPH + 2 H(+). It catalyses the reaction acetaldehyde + NADP(+) + H2O = acetate + NADPH + 2 H(+). It carries out the reaction chloroacetaldehyde + NADP(+) + H2O = chloroacetate + NADPH + 2 H(+). The catalysed reaction is propanal + NADP(+) + H2O = propanoate + NADPH + 2 H(+). Its activity is regulated as follows. Magnesium increases enzyme activity with various substrates. Functionally, catalyzes the NADP(+)-dependent oxidation of diverse aldehydes to their corresponding carboxylic acids, with a preference for acetaldehyde and chloroacetaldehyde. May play a role in detoxifying aldehydes present during stationary phase. Cannot use NAD(+) instead of NADP(+) as the electron acceptor. To a lesser extent is also able to oxidize propionaldehyde (propanal), benzaldehyde, mafosfamide, and 4-hydroperoxycyclophosphamide. Does not use either glyceraldehyde or glycolaldehyde as substrates. The protein is Aldehyde dehydrogenase B of Escherichia coli (strain K12).